A 149-amino-acid polypeptide reads, in one-letter code: Transcriptional regulator MraZ (149 aa).

SpoVT-AbrB domains lie at 7–54 (KYVN…GISH) and 83–126 (AVQL…QPQN).

The protein belongs to the MraZ family. In terms of assembly, forms oligomers.

Its subcellular location is the cytoplasm. The protein localises to the nucleoid. The sequence is that of Transcriptional regulator MraZ from Rickettsia felis (strain ATCC VR-1525 / URRWXCal2) (Rickettsia azadi).